A 2193-amino-acid chain; its full sequence is Non-reducing polyketide synthase esdpA (2193 aa).

A Starter acyltransferase (SAT) domain is found at 90-252 (NVLLAPLTVL…AKVQVNGRYH (163 aa)). Residues 381 to 797 (DECVAIVGAA…GNNTVIIVCE (417 aa)) form the Ketosynthase family 3 (KS3) domain. Catalysis depends on for beta-ketoacyl synthase activity residues cysteine 546, histidine 682, and histidine 720. Residues 906 to 1158 (VFSGQSGMTV…YFVDAVRRIK (253 aa)) form the Malonyl-CoA:ACP transacylase (MAT) domain. Serine 992 serves as the catalytic For acyl/malonyl transferase activity. Positions 1265–1392 (PPMLSLENFS…GRVVLEDRRR (128 aa)) are N-terminal hotdog fold. The 305-residue stretch at 1265–1569 (PPMLSLENFS…FVKISSHILQ (305 aa)) folds into the PKS/mFAS DH domain. Positions 1419–1569 (VFSASGSIAY…FVKISSHILQ (151 aa)) are C-terminal hotdog fold. Aspartate 1479 functions as the Proton donor; for dehydratase activity in the catalytic mechanism. Positions 1723–1799 (RILSDSMIKL…ELHDLMQSHP (77 aa)) constitute a Carrier domain. Serine 1759 is subject to O-(pantetheine 4'-phosphoryl)serine. Positions 1944–2177 (YHGSEHKLLR…GFTHVDWSND (234 aa)) are methyltransferase (CMeT) domain.

Requires pantetheine 4'-phosphate as cofactor.

Its pathway is secondary metabolite biosynthesis; terpenoid biosynthesis. In terms of biological role, non-reducing polyketide synthase; part of the cluster that mediates the biosynthesis of shearones, diterpenoid pyrones (DPs) which are structurally diverse meroterpenoids consisting of a diterpene linked by a pyrone, and which may exhibit a range of bioactivities. Whitin the pathway, esdpA takes part to the biosynthesis of the molecular scaffold via the production of the alpha-pyrone from one molecule of acetyl-CoA, two molecules of malonyl-CoA and one molecule of S-adenosyl-L-methionine (SAM). The molecular scaffold is commonly biosynthesized by a series of enzymes including the non-reducing polyketide synthase (NR-PKS) esdpA that generates an alpha-pyrone; the prenyltransferase esdpC that attaches a geranylgeranyl pyrophosphate (GGPP) produced by the GGPP synthase (GGPPS) esdpD onto the pyrone unit; the FAD-dependent monooxygenase esdpE that converts an olefin on the diterpene unit into an epoxide; and the terpene cyclase esdpB that catalyzes the cyclization reactions to give the molecular backbone shearone A. In the modification steps, esdpF oxidizes the hydroxy group to a ketone at C-3 and esdpG then attaches hydroxy groups at both C-11 and C-12. After that, esdpI hydroxylates at C-20 and esdpH hydroxylates at C-6'. The ether bridge is generated by nucleophilic attack of the hydroxy group at C-20 to the carbonyl carbon at C-3. EsdpH can also functions prior to esdpI. The different combinations of these modification enzymes lead to the production of diverse shearone derivatives, shearone I being the end product of the pathway. The alpha-ketoglutarate-dependent dioxygenase esdpJ seems not to be involved in this pathway. The sequence is that of Non-reducing polyketide synthase esdpA from Penicillium shearii (Eupenicillium shearii).